A 604-amino-acid polypeptide reads, in one-letter code: Putative JmjC domain-containing protein L887 (604 aa).

A JmjC domain is found at 1-127 (MNNMKKIIII…PNNKLNLIQP (127 aa)). The helical transmembrane segment at 4–24 (MKKIIIISIIIIIIIVLLFYI) threads the bilayer.

The protein resides in the membrane. In Acanthamoeba polyphaga (Amoeba), this protein is Putative JmjC domain-containing protein L887.